The chain runs to 213 residues: MFTLRELPFAKDSMGDFLSPVAFDFHHGKHHQTYVNNLNNLIKGTDFEKSSLFAILTKSSGGVFNNAAQIYNHDFYWDCLSPKATALSDELKEALEKDFGSLEKFKEDFIKSATTLFGSGWNWAAYNLDTQKIEIIQTSNAQTPVTDKKVPLLVVDVWEHAYYIDHKNARPVYLEKFYGHVNWHFVSQCYEWAKKEGLGSVDYYINELVHKKA.

His-26, His-73, Asp-156, and His-160 together coordinate Fe cation.

The protein belongs to the iron/manganese superoxide dismutase family. Homodimer. Requires Fe cation as cofactor.

It catalyses the reaction 2 superoxide + 2 H(+) = H2O2 + O2. Its function is as follows. Destroys superoxide anion radicals which are normally produced within the cells and which are toxic to biological systems. The protein is Superoxide dismutase [Fe] (sodB) of Helicobacter pylori (strain J99 / ATCC 700824) (Campylobacter pylori J99).